The following is a 273-amino-acid chain: Formamidopyrimidine-DNA glycosylase (273 aa).

The active-site Schiff-base intermediate with DNA is the P2. Catalysis depends on E3, which acts as the Proton donor. Residue K58 is the Proton donor; for beta-elimination activity of the active site. Positions 91 and 110 each coordinate DNA. The FPG-type zinc-finger motif lies at Q238–C272. The Proton donor; for delta-elimination activity role is filled by R262.

Belongs to the FPG family. As to quaternary structure, monomer. Requires Zn(2+) as cofactor.

It carries out the reaction Hydrolysis of DNA containing ring-opened 7-methylguanine residues, releasing 2,6-diamino-4-hydroxy-5-(N-methyl)formamidopyrimidine.. It catalyses the reaction 2'-deoxyribonucleotide-(2'-deoxyribose 5'-phosphate)-2'-deoxyribonucleotide-DNA = a 3'-end 2'-deoxyribonucleotide-(2,3-dehydro-2,3-deoxyribose 5'-phosphate)-DNA + a 5'-end 5'-phospho-2'-deoxyribonucleoside-DNA + H(+). Functionally, involved in base excision repair of DNA damaged by oxidation or by mutagenic agents. Acts as a DNA glycosylase that recognizes and removes damaged bases. Has a preference for oxidized purines, such as 7,8-dihydro-8-oxoguanine (8-oxoG). Has AP (apurinic/apyrimidinic) lyase activity and introduces nicks in the DNA strand. Cleaves the DNA backbone by beta-delta elimination to generate a single-strand break at the site of the removed base with both 3'- and 5'-phosphates. This chain is Formamidopyrimidine-DNA glycosylase, found in Streptococcus agalactiae serotype Ia (strain ATCC 27591 / A909 / CDC SS700).